The primary structure comprises 699 residues: Polyribonucleotide nucleotidyltransferase (699 aa).

Mg(2+) is bound by residues aspartate 493 and aspartate 499. One can recognise a KH domain in the interval 560–620; sequence PLIANIEIDP…NKVNQAIEYI (61 aa). In terms of domain architecture, S1 motif spans 630–697; the sequence is GDMFEGKITR…DSGRIQLGKA (68 aa).

Belongs to the polyribonucleotide nucleotidyltransferase family. Requires Mg(2+) as cofactor.

The protein localises to the cytoplasm. It carries out the reaction RNA(n+1) + phosphate = RNA(n) + a ribonucleoside 5'-diphosphate. Its function is as follows. Involved in mRNA degradation. Catalyzes the phosphorolysis of single-stranded polyribonucleotides processively in the 3'- to 5'-direction. The chain is Polyribonucleotide nucleotidyltransferase from Thermosipho melanesiensis (strain DSM 12029 / CIP 104789 / BI429).